Consider the following 449-residue polypeptide: Phosphomannomutase (449 aa).

Serine 97 serves as the catalytic Phosphoserine intermediate. Residues serine 97, aspartate 237, aspartate 239, and aspartate 241 each coordinate Mg(2+).

It belongs to the phosphohexose mutase family. It depends on Mg(2+) as a cofactor.

The enzyme catalyses alpha-D-mannose 1-phosphate = D-mannose 6-phosphate. It participates in amino-acid biosynthesis. Catalyzes the formation of mannose-1-P from mannose-6-P. Can also use glucose-6-P. This Methanocaldococcus jannaschii (strain ATCC 43067 / DSM 2661 / JAL-1 / JCM 10045 / NBRC 100440) (Methanococcus jannaschii) protein is Phosphomannomutase (manB).